We begin with the raw amino-acid sequence, 234 residues long: 1-(5-phosphoribosyl)-5-[(5-phosphoribosylamino)methylideneamino] imidazole-4-carboxamide isomerase (234 aa).

Residue aspartate 9 is the Proton acceptor of the active site. The active-site Proton donor is the aspartate 131.

Belongs to the HisA/HisF family.

It localises to the cytoplasm. The enzyme catalyses 1-(5-phospho-beta-D-ribosyl)-5-[(5-phospho-beta-D-ribosylamino)methylideneamino]imidazole-4-carboxamide = 5-[(5-phospho-1-deoxy-D-ribulos-1-ylimino)methylamino]-1-(5-phospho-beta-D-ribosyl)imidazole-4-carboxamide. The protein operates within amino-acid biosynthesis; L-histidine biosynthesis; L-histidine from 5-phospho-alpha-D-ribose 1-diphosphate: step 4/9. This is 1-(5-phosphoribosyl)-5-[(5-phosphoribosylamino)methylideneamino] imidazole-4-carboxamide isomerase from Staphylococcus aureus (strain JH1).